Here is a 420-residue protein sequence, read N- to C-terminus: Serine--tRNA ligase (420 aa).

An L-serine-binding site is contributed by 227–229 (TSE). Residues 258–260 (RRE) and valine 274 each bind ATP. L-serine is bound at residue glutamate 281. ATP is bound at residue 345-348 (EVTS). L-serine is bound at residue threonine 379.

It belongs to the class-II aminoacyl-tRNA synthetase family. Type-1 seryl-tRNA synthetase subfamily. In terms of assembly, homodimer. The tRNA molecule binds across the dimer.

Its subcellular location is the cytoplasm. It carries out the reaction tRNA(Ser) + L-serine + ATP = L-seryl-tRNA(Ser) + AMP + diphosphate + H(+). The catalysed reaction is tRNA(Sec) + L-serine + ATP = L-seryl-tRNA(Sec) + AMP + diphosphate + H(+). It functions in the pathway aminoacyl-tRNA biosynthesis; selenocysteinyl-tRNA(Sec) biosynthesis; L-seryl-tRNA(Sec) from L-serine and tRNA(Sec): step 1/1. Its function is as follows. Catalyzes the attachment of serine to tRNA(Ser). Is also able to aminoacylate tRNA(Sec) with serine, to form the misacylated tRNA L-seryl-tRNA(Sec), which will be further converted into selenocysteinyl-tRNA(Sec). This is Serine--tRNA ligase from Acidothermus cellulolyticus (strain ATCC 43068 / DSM 8971 / 11B).